We begin with the raw amino-acid sequence, 927 residues long: Protein LONGIFOLIA 1 (927 aa).

Disordered regions lie at residues 41 to 198 (TGDE…EGRR), 210 to 257 (YDER…GHRR), 460 to 588 (AQKV…SDSN), and 605 to 626 (YERN…DLGM). Residues 86–114 (SSESSSRLSFSSSPCSSSFSSADISTTAS) are compositionally biased toward low complexity. Polar residues predominate over residues 115–125 (QFEQPGLSNGE). A compositionally biased stretch (basic and acidic residues) spans 146–165 (DIRELVRSSIHKETRTRDEE). A compositionally biased stretch (polar residues) spans 182–193 (KESSPSRNSNEW). Basic and acidic residues predominate over residues 210–226 (YDERETRKTGAKLKETP). Residues 232–245 (SRSNSFRSARSSCS) are compositionally biased toward low complexity. 2 stretches are compositionally biased toward polar residues: residues 483 to 500 (QTES…QSKS) and 538 to 553 (NKNQ…TESA). Basic and acidic residues-rich tracts occupy residues 569–584 (SEDR…RSLR) and 605–616 (YERNSDITEQHT).

In terms of assembly, interacts (via C-terminus) with TON1A and TON1B. Expressed in roots, petioles, leaf blades and floral organs.

Its subcellular location is the nucleus. In terms of biological role, in association with LNG2, regulates leaf morphology by promoting longitudinal polar cell elongation independently of ROT3. In Arabidopsis thaliana (Mouse-ear cress), this protein is Protein LONGIFOLIA 1 (LNG1).